A 427-amino-acid polypeptide reads, in one-letter code: Serine--tRNA ligase (427 aa).

L-serine is bound at residue threonine 230–glutamate 232. Position 261-263 (arginine 261–glutamate 263) interacts with ATP. Residue glutamate 284 coordinates L-serine. An ATP-binding site is contributed by glutamate 348–serine 351. L-serine is bound at residue serine 384.

This sequence belongs to the class-II aminoacyl-tRNA synthetase family. Type-1 seryl-tRNA synthetase subfamily. Homodimer. The tRNA molecule binds across the dimer.

The protein localises to the cytoplasm. The enzyme catalyses tRNA(Ser) + L-serine + ATP = L-seryl-tRNA(Ser) + AMP + diphosphate + H(+). It catalyses the reaction tRNA(Sec) + L-serine + ATP = L-seryl-tRNA(Sec) + AMP + diphosphate + H(+). It functions in the pathway aminoacyl-tRNA biosynthesis; selenocysteinyl-tRNA(Sec) biosynthesis; L-seryl-tRNA(Sec) from L-serine and tRNA(Sec): step 1/1. Its function is as follows. Catalyzes the attachment of serine to tRNA(Ser). Is also able to aminoacylate tRNA(Sec) with serine, to form the misacylated tRNA L-seryl-tRNA(Sec), which will be further converted into selenocysteinyl-tRNA(Sec). The protein is Serine--tRNA ligase of Moorella thermoacetica (strain ATCC 39073 / JCM 9320).